A 336-amino-acid polypeptide reads, in one-letter code: Ornithine carbamoyltransferase, catabolic (336 aa).

Carbamoyl phosphate contacts are provided by residues 62-65 (STRT), glutamine 89, arginine 113, and 140-143 (HPTQ). L-ornithine is bound by residues asparagine 172, aspartate 236, and 240–241 (SM). Carbamoyl phosphate is bound by residues 277 to 278 (CL) and arginine 322.

This sequence belongs to the aspartate/ornithine carbamoyltransferase superfamily. OTCase family.

The protein resides in the cytoplasm. The catalysed reaction is carbamoyl phosphate + L-ornithine = L-citrulline + phosphate + H(+). It functions in the pathway amino-acid degradation; L-arginine degradation via ADI pathway; carbamoyl phosphate from L-arginine: step 2/2. In terms of biological role, reversibly catalyzes the transfer of the carbamoyl group from carbamoyl phosphate (CP) to the N(epsilon) atom of ornithine (ORN) to produce L-citrulline. In Staphylococcus aureus (strain MRSA252), this protein is Ornithine carbamoyltransferase, catabolic.